The sequence spans 170 residues: Class I hydrophobin E (170 aa).

The first 19 residues, 1–19 (MQLTTLLTGLISVLSVTTA), serve as a signal peptide directing secretion. 4 disulfides stabilise this stretch: C62-C126, C70-C117, C71-C105, and C127-C139.

The protein belongs to the fungal hydrophobin family.

It is found in the secreted. The protein resides in the cell wall. Functionally, aerial growth, conidiation, and dispersal of filamentous fungi in the environment rely upon a capability of their secreting small amphipathic proteins called hydrophobins (HPBs) with low sequence identity. Class I can self-assemble into an outermost layer of rodlet bundles on aerial cell surfaces, conferring cellular hydrophobicity that supports fungal growth, development and dispersal; whereas Class II form highly ordered films at water-air interfaces through intermolecular interactions but contribute nothing to the rodlet structure. In P.expansum, hydrophobins contribute to germination, tolerance to cold stress and mycotoxins patulin and citrinin production. The protein is Class I hydrophobin E of Penicillium expansum (Blue mold rot fungus).